A 250-amino-acid chain; its full sequence is GTP cyclohydrolase 1 type 2 homolog (250 aa).

Positions 63, 64, 100, 218, and 222 each coordinate a divalent metal cation.

This sequence belongs to the GTP cyclohydrolase I type 2/NIF3 family. Homohexamer.

The chain is GTP cyclohydrolase 1 type 2 homolog from Pyrococcus abyssi (strain GE5 / Orsay).